Consider the following 499-residue polypeptide: Pyruvate kinase 1 (499 aa).

Residue Arg-50 coordinates substrate. K(+) contacts are provided by Asn-52, Ser-54, Asp-84, and Thr-85. 52–55 contacts ATP; the sequence is NFSH. Arg-91 is an ATP binding site. Residue Glu-241 participates in Mg(2+) binding. Gly-264, Asp-265, and Thr-297 together coordinate substrate. Asp-265 serves as a coordination point for Mg(2+).

This sequence belongs to the pyruvate kinase family. In terms of assembly, homotetramer. Mg(2+) serves as cofactor. It depends on K(+) as a cofactor.

It carries out the reaction pyruvate + ATP = phosphoenolpyruvate + ADP + H(+). It participates in carbohydrate degradation; glycolysis; pyruvate from D-glyceraldehyde 3-phosphate: step 5/5. With respect to regulation, activated by fructose 2,6-bisphosphate, activated by the effector in a cooperative manner. The protein is Pyruvate kinase 1 (PYK1) of Trypanosoma brucei brucei.